The sequence spans 452 residues: Bis(5'-adenosyl)-triphosphatase ENPP4 (452 aa).

Positions 1-15 (MKLLVILLFSGLITG) are cleaved as a signal peptide. At 16 to 406 (FRSDSSSSLP…DQWCINLPEA (391 aa)) the chain is on the extracellular side. Zn(2+) is bound by residues aspartate 34 and threonine 70. Threonine 70 (AMP-threonine intermediate) is an active-site residue. Substrate contacts are provided by asparagine 91 and tyrosine 154. N-linked (GlcNAc...) asparagine glycosylation is found at asparagine 155 and asparagine 166. Zn(2+)-binding residues include aspartate 189, histidine 193, aspartate 237, and histidine 238. Aspartate 189 contacts substrate. Cysteine 254 and cysteine 287 are oxidised to a cystine. Residue asparagine 276 is glycosylated (N-linked (GlcNAc...) asparagine). Histidine 335 provides a ligand contact to Zn(2+). Cysteine 393 and cysteine 400 are oxidised to a cystine. The chain crosses the membrane as a helical span at residues 407-427 (IAIVIGSLLVLTMLTCLIIIM). Over 428 to 452 (QNRLSVPRPFSRLQLQEDDDDPLIG) the chain is Cytoplasmic.

Belongs to the nucleotide pyrophosphatase/phosphodiesterase family. Zn(2+) is required as a cofactor.

Its subcellular location is the cell membrane. It catalyses the reaction P(1),P(3)-bis(5'-adenosyl) triphosphate + H2O = AMP + ADP + 2 H(+). In terms of biological role, hydrolyzes extracellular Ap3A into AMP and ADP, and Ap4A into AMP and ATP. Ap3A and Ap4A are diadenosine polyphosphates thought to induce proliferation of vascular smooth muscle cells. Acts as a procoagulant, mediating platelet aggregation at the site of nascent thrombus via release of ADP from Ap3A and activation of ADP receptors. The chain is Bis(5'-adenosyl)-triphosphatase ENPP4 (ENPP4) from Pongo abelii (Sumatran orangutan).